Reading from the N-terminus, the 239-residue chain is MAVPRQRAAGGLCGDGHHRFWLGPGGGALLAGSGRCRGGGLVILLDVPASMLHGGLNFRQVRWRAIGAILPGMAVGALIGLWLMGQLDKRWPLFLLGLYITWVGWRTLRHGQQAARALPGWTHHAGSGLVGVLEVMFATAGPMVIALLQRRLREVAEIRATVPVVMVVAASIAIAVLFGAGQIDRAHTFERWLVALPIAFMGVVLGNRLARHIPPPAMRRAMAVLLIASGLSLTQHLWR.

A run of 4 helical transmembrane segments spans residues 65–85 (AIGAILPGMAVGALIGLWLMG), 128–148 (GLVGVLEVMFATAGPMVIALL), 160–180 (ATVPVVMVVAASIAIAVLFGA), and 186–206 (AHTFERWLVALPIAFMGVVLG).

It belongs to the 4-toluene sulfonate uptake permease (TSUP) (TC 2.A.102) family. As to quaternary structure, part of a two-component transport system composed of TsaT and TsaS.

The protein resides in the cell inner membrane. In terms of biological role, involved in the uptake of p-toluenesulphonate (TSA). The protein is Probable inner membrane transporter protein TsaS (tsaS) of Comamonas testosteroni (Pseudomonas testosteroni).